A 168-amino-acid polypeptide reads, in one-letter code: Peptide deformylase (168 aa).

Fe cation-binding residues include C91 and H133. E134 is an active-site residue. H137 lines the Fe cation pocket.

This sequence belongs to the polypeptide deformylase family. The cofactor is Fe(2+).

It carries out the reaction N-terminal N-formyl-L-methionyl-[peptide] + H2O = N-terminal L-methionyl-[peptide] + formate. Functionally, removes the formyl group from the N-terminal Met of newly synthesized proteins. Requires at least a dipeptide for an efficient rate of reaction. N-terminal L-methionine is a prerequisite for activity but the enzyme has broad specificity at other positions. In Endomicrobium trichonymphae, this protein is Peptide deformylase.